The following is a 259-amino-acid chain: Probable metal transport system ATP-binding protein CPn_0348/CP_0412/CPj0348/CpB0355 (259 aa).

The 239-residue stretch at 3-241 (VKDETFWSVH…TIFQTYGCEI (239 aa)) folds into the ABC transporter domain. 41–48 (GPNGAGKS) provides a ligand contact to ATP.

Belongs to the ABC transporter superfamily.

The protein localises to the cell inner membrane. Functionally, part of an ATP-driven transport system CPn0346/CPn0347/CPn0348/CPn0349 for a metal. Probably responsible for energy coupling to the transport system. In Chlamydia pneumoniae (Chlamydophila pneumoniae), this protein is Probable metal transport system ATP-binding protein CPn_0348/CP_0412/CPj0348/CpB0355.